The chain runs to 78 residues: Acyl carrier protein (78 aa).

The 76-residue stretch at 2–77 (STIEERVKKI…AAIDYVKAHQ (76 aa)) folds into the Carrier domain. O-(pantetheine 4'-phosphoryl)serine is present on Ser37.

It belongs to the acyl carrier protein (ACP) family. In terms of processing, 4'-phosphopantetheine is transferred from CoA to a specific serine of apo-ACP by AcpS. This modification is essential for activity because fatty acids are bound in thioester linkage to the sulfhydryl of the prosthetic group.

It is found in the cytoplasm. Its pathway is lipid metabolism; fatty acid biosynthesis. Carrier of the growing fatty acid chain in fatty acid biosynthesis. The polypeptide is Acyl carrier protein (Pseudomonas putida (strain ATCC 700007 / DSM 6899 / JCM 31910 / BCRC 17059 / LMG 24140 / F1)).